Reading from the N-terminus, the 605-residue chain is NADH-ubiquinone oxidoreductase chain 5 (605 aa).

The next 16 membrane-spanning stretches (helical) occupy residues 11 to 31 (ILITELLILALSALMTMLPPI), 49 to 69 (LSLTSILIHILIEEPSSISSL), 77 to 97 (LAMSIKIDYYSLIFISIALFI), 120 to 140 (MFLLLFLMSMIMFIAANNFFP), 141 to 161 (MLVGWGTMGLMSYLLISWWHG), 178 to 198 (LADIGFILTFSWCITYMSSLD), 202 to 222 (FFATSTLVTGVPILGMLMAAM), 244 to 264 (VSALLHSSTMVTAGVYLLIGM), 273 to 295 (GFSEACLTMGAATALYASFKALL), 302 to 322 (IIAFSTLSQLGFMMATVGLNH), 325 to 345 (LAFMHLCMHAFFKAMMFLCAG), 371 to 391 (ASCFTLSTLALAGFPFLTGFF), 408 to 425 (LWATMLLISTMFTAIYSL), 457 to 477 (LALASIVTGSLFSLFTPPIYT), 488 to 508 (LAALTLTFMSAFLAMYLISLA), and 584 to 604 (IKTYFMAFLVTFVIILYIMLF).

It belongs to the complex I subunit 5 family.

Its subcellular location is the mitochondrion inner membrane. It carries out the reaction a ubiquinone + NADH + 5 H(+)(in) = a ubiquinol + NAD(+) + 4 H(+)(out). In terms of biological role, core subunit of the mitochondrial membrane respiratory chain NADH dehydrogenase (Complex I) that is believed to belong to the minimal assembly required for catalysis. Complex I functions in the transfer of electrons from NADH to the respiratory chain. The immediate electron acceptor for the enzyme is believed to be ubiquinone. This Pelomedusa subrufa (African side-necked turtle) protein is NADH-ubiquinone oxidoreductase chain 5 (MT-ND5).